The chain runs to 193 residues: Putative protein-glutamate methylesterase/protein-glutamine glutaminase (193 aa).

The CheB-type methylesterase domain maps to 1 to 179 (MNYEAIVIGV…DYVLSLEKIA (179 aa)). Active-site residues include Ser-11, His-38, and Asp-131.

This sequence belongs to the CheB family.

Its subcellular location is the cytoplasm. It carries out the reaction [protein]-L-glutamate 5-O-methyl ester + H2O = L-glutamyl-[protein] + methanol + H(+). The enzyme catalyses L-glutaminyl-[protein] + H2O = L-glutamyl-[protein] + NH4(+). In terms of biological role, may be involved in chemotaxis. The sequence is that of Putative protein-glutamate methylesterase/protein-glutamine glutaminase (cheB2) from Leptospira interrogans serogroup Icterohaemorrhagiae serovar copenhageni (strain Fiocruz L1-130).